A 481-amino-acid chain; its full sequence is MGFHQILVTVVALALASVRAEFPSRTDSPTDCPEADQGCWCRGSFAQCWRTYEEAGMTGEIGNRITKLDLLYQPSEEIVTYIRRSSAMRELRISEDGVSLDCSCDLIYALDDKHVTLVDQAELTFSNCQQRGWPRDSMTARSFVNRCHVSRMQDGDLRKRRESEDVDDDDVSKRASPRKGDEPAGHTLKDLAPQNTNHLVSIDGADKHPADELVNFISGHSPTRRATDNDAAVSDDSKRGARKKRYVNTMGYPQAMSPQMGGVNYGQPAQQGYGAQGMGGPVGGGPMGGPPQFGALPPGQADTDFGSSSSSVDGGDTTISARVMDDIKAVLGATKIDLPVDINDPYDLGLLLRHLRHHSNLLANIGDPAVREQVLSAMQEEEEEEEEDAATGAQQGVLNGNAPGQAGFGGGGGGGAMMSPQQMGGQPQGMIGQPQGMGFPHEGMGGPPQGMGMPHQGMGGPPQGMGMPPQGQPYGQGYLQG.

Positions 1-20 (MGFHQILVTVVALALASVRA) are cleaved as a signal peptide. The propeptide occupies 21–245 (EFPSRTDSPT…DSKRGARKKR (225 aa)). Basic and acidic residues-rich tracts occupy residues 154 to 163 (DGDLRKRRES) and 178 to 189 (RKGDEPAGHTLK). Disordered stretches follow at residues 154–193 (DGDL…DLAP) and 219–243 (GHSP…GARK). The fucose-binding domain stretch occupies residues 352–360 (LRHLRHHSN). Positions 376-481 (SAMQEEEEEE…QPYGQGYLQG (106 aa)) are disordered. The segment covering 379–389 (QEEEEEEEEDA) has biased composition (acidic residues). Residues 406 to 416 (AGFGGGGGGGA) are compositionally biased toward gly residues. 2 stretches are compositionally biased toward low complexity: residues 417 to 440 (MMSP…MGFP) and 464 to 481 (GMGM…YLQG).

It belongs to the bindin family.

Its subcellular location is the cytoplasmic vesicle. The protein resides in the secretory vesicle. The protein localises to the acrosome lumen. Its function is as follows. Species-specific sea urchin sperm protein required for adhesion of sperm to the egg surface during fertilization. Bindin coats the acrosomal process after it is externalized by the acrosome reaction. It binds to sulfated, fucose-containing polysaccharides on the vitelline layer receptor proteoglycans which cover the egg plasma membrane. The sequence is that of Bindin from Strongylocentrotus purpuratus (Purple sea urchin).